The chain runs to 272 residues: Acidic leucine-rich nuclear phosphoprotein 32-related protein 2 (272 aa).

LRR repeat units lie at residues Ser57–Pro78, Ala79–Ala100, and Thr106–Ala127. Positions Cys139–Glu184 constitute an LRRCT domain. Residues Gly163–Asn272 are disordered. The segment covering Met164 to Glu241 has biased composition (acidic residues). Residues Ser248 to Pro257 show a composition bias toward polar residues.

Belongs to the ANP32 family.

The sequence is that of Acidic leucine-rich nuclear phosphoprotein 32-related protein 2 from Oryza sativa subsp. japonica (Rice).